The sequence spans 241 residues: Major prion protein (241 aa).

The signal sequence occupies residues M1 to C15. The tract at residues K16–Y31 is interaction with ADGRG6. An interaction with GRB2, ERI3 and SYN1 region spans residues K16–S223. Positions R18 to S101 are disordered. 5 consecutive repeat copies span residues P44 to Q52, P53 to Q60, P61 to Q68, P69 to Q76, and P77 to Q84. Residues P44–Q84 are 5 X 8 AA tandem repeats of P-H-G-G-G-W-G-Q. Residues Q45 to T88 are compositionally biased toward gly residues. Positions 54, 55, 56, 62, 63, 64, 70, 71, 72, 78, 79, and 80 each coordinate Cu(2+). The segment covering Q91–S101 has biased composition (basic residues). An intrachain disulfide couples C172 to C207. Residues N174 and N190 are each glycosylated (N-linked (GlcNAc...) asparagine). S223 is lipidated: GPI-anchor amidated serine. A propeptide spans S224–I241 (removed in mature form).

It belongs to the prion family. As to quaternary structure, monomer and homodimer. Has a tendency to aggregate into amyloid fibrils containing a cross-beta spine, formed by a steric zipper of superposed beta-strands. Soluble oligomers may represent an intermediate stage on the path to fibril formation. Copper binding may promote oligomerization. Interacts with GRB2, APP, ERI3/PRNPIP and SYN1. Mislocalized cytosolically exposed PrP interacts with MGRN1; this interaction alters MGRN1 subcellular location and causes lysosomal enlargement. Interacts with APP. Interacts with KIAA1191. Interacts with ADGRG6.

It localises to the cell membrane. The protein localises to the golgi apparatus. In terms of biological role, its primary physiological function is unclear. May play a role in neuronal development and synaptic plasticity. May be required for neuronal myelin sheath maintenance. May promote myelin homeostasis through acting as an agonist for ADGRG6 receptor. May play a role in iron uptake and iron homeostasis. Soluble oligomers are toxic to cultured neuroblastoma cells and induce apoptosis (in vitro). Association with GPC1 (via its heparan sulfate chains) targets PRNP to lipid rafts. Also provides Cu(2+) or Zn(2+) for the ascorbate-mediated GPC1 deaminase degradation of its heparan sulfate side chains. The chain is Major prion protein (PRNP) from Mandrillus sphinx (Mandrill).